Here is a 216-residue protein sequence, read N- to C-terminus: Elongation factor Ts (216 aa).

The interval 81–84 (TDFV) is involved in Mg(2+) ion dislocation from EF-Tu.

It belongs to the EF-Ts family.

The protein localises to the cytoplasm. Its function is as follows. Associates with the EF-Tu.GDP complex and induces the exchange of GDP to GTP. It remains bound to the aminoacyl-tRNA.EF-Tu.GTP complex up to the GTP hydrolysis stage on the ribosome. The polypeptide is Elongation factor Ts (Geotalea daltonii (strain DSM 22248 / JCM 15807 / FRC-32) (Geobacter daltonii)).